The primary structure comprises 444 residues: Zinc protease PqqE (444 aa).

The first 28 residues, 1 to 28, serve as a signal peptide directing secretion; it reads MKHFSVKRLLGLSSVLLVTLGASMHAQS. H78 is a binding site for Zn(2+). The Proton acceptor role is filled by E81. Residues H82 and E158 each contribute to the Zn(2+) site.

Belongs to the peptidase M16 family. Requires Zn(2+) as cofactor.

It localises to the secreted. Can function alone, but full activity requires the presence of the non-peptidase homolog YmxG. Its function is as follows. Virulence factor that cleaves the cytoplasmic domain of the human junctional adhesion molecule A (JAM-A), compromising gastric epithelial barrier function and cell-cell adhesion. Cleavage of JAM-A occurs after Ala-285 or, to a lesser extent, before Ala-285. This is Zinc protease PqqE from Helicobacter pylori (strain ATCC 700392 / 26695) (Campylobacter pylori).